Reading from the N-terminus, the 137-residue chain is Probable 4-amino-4-deoxy-L-arabinose-phosphoundecaprenol flippase subunit ArnF (137 aa).

Residues 1–5 are Cytoplasmic-facing; the sequence is MSRAR. A helical membrane pass occupies residues 6-26; sequence GFAFALGSVALVSGAQLGMRW. At 27 to 49 the chain is on the periplasmic side; that stretch reads SMTRLPAPDQWLPALSAGSVDLA. A helical transmembrane segment spans residues 50–70; sequence ALAVVAAAIAAYALSMLCWLL. At 71–80 the chain is on the cytoplasmic side; the sequence is ALRDLPLGRA. Residues 81–101 traverse the membrane as a helical segment; it reads YSLLSISYALVYLLAASLPLF. Position 102 (asparagine 102) is a topological domain, periplasmic. Residues 103-123 traverse the membrane as a helical segment; the sequence is EPFTLSKTLGVALVILGVITI. The Cytoplasmic portion of the chain corresponds to 124–137; it reads NSRSAPATSPRNTP.

Belongs to the ArnF family. In terms of assembly, heterodimer of ArnE and ArnF.

The protein localises to the cell inner membrane. It functions in the pathway bacterial outer membrane biogenesis; lipopolysaccharide biosynthesis. In terms of biological role, translocates 4-amino-4-deoxy-L-arabinose-phosphoundecaprenol (alpha-L-Ara4N-phosphoundecaprenol) from the cytoplasmic to the periplasmic side of the inner membrane. In Pseudomonas fluorescens (strain ATCC BAA-477 / NRRL B-23932 / Pf-5), this protein is Probable 4-amino-4-deoxy-L-arabinose-phosphoundecaprenol flippase subunit ArnF.